The sequence spans 533 residues: CTP synthase (533 aa).

Residues 1–265 are amidoligase domain; it reads MTKFIFVTGG…PAYLARRLGL (265 aa). Residue serine 13 coordinates CTP. Residue serine 13 participates in UTP binding. 14–19 lines the ATP pocket; that stretch reads GLGKGI. Position 54 (tyrosine 54) interacts with L-glutamine. Aspartate 71 provides a ligand contact to ATP. Residues aspartate 71 and glutamate 139 each coordinate Mg(2+). CTP is bound by residues 146–148, 186–191, and lysine 222; these read DIE and KTKPTQ. Residues 186 to 191 and lysine 222 contribute to the UTP site; that span reads KTKPTQ. The region spanning 290–532 is the Glutamine amidotransferase type-1 domain; that stretch reads EIAIVGKYVK…VEAAKKKKYG (243 aa). Position 351 (glycine 351) interacts with L-glutamine. Cysteine 378 acts as the Nucleophile; for glutamine hydrolysis in catalysis. L-glutamine is bound by residues 379 to 382, glutamate 402, and arginine 459; that span reads FGFQ. Catalysis depends on residues histidine 505 and glutamate 507.

The protein belongs to the CTP synthase family. Homotetramer.

It carries out the reaction UTP + L-glutamine + ATP + H2O = CTP + L-glutamate + ADP + phosphate + 2 H(+). It catalyses the reaction L-glutamine + H2O = L-glutamate + NH4(+). The enzyme catalyses UTP + NH4(+) + ATP = CTP + ADP + phosphate + 2 H(+). It participates in pyrimidine metabolism; CTP biosynthesis via de novo pathway; CTP from UDP: step 2/2. With respect to regulation, allosterically activated by GTP, when glutamine is the substrate; GTP has no effect on the reaction when ammonia is the substrate. The allosteric effector GTP functions by stabilizing the protein conformation that binds the tetrahedral intermediate(s) formed during glutamine hydrolysis. Inhibited by the product CTP, via allosteric rather than competitive inhibition. In terms of biological role, catalyzes the ATP-dependent amination of UTP to CTP with either L-glutamine or ammonia as the source of nitrogen. Regulates intracellular CTP levels through interactions with the four ribonucleotide triphosphates. The protein is CTP synthase of Thermococcus kodakarensis (strain ATCC BAA-918 / JCM 12380 / KOD1) (Pyrococcus kodakaraensis (strain KOD1)).